Here is an 87-residue protein sequence, read N- to C-terminus: Translation initiation factor IF-1 2 (87 aa).

In terms of domain architecture, S1-like spans 1-72 (MAKEELLELD…TKGRINFRHK (72 aa)). Positions 68–87 (NFRHKDANSPRPPRSGQPRR) are disordered. A compositionally biased stretch (pro residues) spans 77–87 (PRPPRSGQPRR).

Belongs to the IF-1 family. Component of the 30S ribosomal translation pre-initiation complex which assembles on the 30S ribosome in the order IF-2 and IF-3, IF-1 and N-formylmethionyl-tRNA(fMet); mRNA recruitment can occur at any time during PIC assembly.

The protein resides in the cytoplasm. Its function is as follows. One of the essential components for the initiation of protein synthesis. Stabilizes the binding of IF-2 and IF-3 on the 30S subunit to which N-formylmethionyl-tRNA(fMet) subsequently binds. Helps modulate mRNA selection, yielding the 30S pre-initiation complex (PIC). Upon addition of the 50S ribosomal subunit IF-1, IF-2 and IF-3 are released leaving the mature 70S translation initiation complex. The polypeptide is Translation initiation factor IF-1 2 (Burkholderia cenocepacia (strain HI2424)).